The primary structure comprises 1704 residues: Arf-GAP with Rho-GAP domain, ANK repeat and PH domain-containing protein 2 (1704 aa).

The SAM domain occupies 6–70 (EVNVDIKDFL…LKQLQIILSK (65 aa)). Tyrosine 77 carries the phosphotyrosine modification. The segment at 126 to 161 (NLEDSDASVERSQYPQSDDKLSPPKRDFPTAEEPHL) is disordered. A compositionally biased stretch (basic and acidic residues) spans 142-160 (SDDKLSPPKRDFPTAEEPH). PH domains follow at residues 482–574 (KKVK…NALK) and 587–679 (TPEK…QSIA). Positions 676 to 811 (QSIAETLSDY…TLLASLTKEE (136 aa)) constitute an Arf-GAP domain. The C4-type zinc finger occupies 700–723 (CADCKAPDPDWASINLCVVICKKC). 2 consecutive PH domains span residues 878-1003 (DIHS…KHFV) and 1014-1114 (DYDL…AGTD). One can recognise a Rho-GAP domain in the interval 1116 to 1297 (NALQDQQLSK…DLINNYVEIF (182 aa)). The Ras-associating domain occupies 1326-1420 (GDLLIEVYVE…AYLVVKRFLT (95 aa)). The region spanning 1434–1537 (GSIKEGILKI…WMTSIFIAQH (104 aa)) is the PH 5 domain. At serine 1632 the chain carries Phosphoserine. Residues 1636–1675 (LEDTEPEAPLGQPKGHKGLKTLRKTEDRNSKATLDSDHKL) form a disordered region. A compositionally biased stretch (basic and acidic residues) spans 1658-1675 (RKTEDRNSKATLDSDHKL).

In terms of tissue distribution, detected in brain, thymus, lymph node, thyroid, spinal cord, trachea, heart, skeletal muscle, spleen, kidney, liver, placenta, lung and peripheral blood leukocytes.

The protein resides in the cytoplasm. Its function is as follows. Phosphatidylinositol 3,4,5-trisphosphate-dependent GTPase-activating protein that modulates actin cytoskeleton remodeling by regulating ARF and RHO family members. Is activated by phosphatidylinositol 3,4,5-trisphosphate (PtdIns(3,4,5)P3) binding. Can be activated by phosphatidylinositol 3,4-bisphosphate (PtdIns(3,4,5)P2) binding, albeit with lower efficiency. The protein is Arf-GAP with Rho-GAP domain, ANK repeat and PH domain-containing protein 2 (ARAP2) of Homo sapiens (Human).